The primary structure comprises 437 residues: MPLQWFLKYRPKSLQEVENQDEVKEELKKWIESWLNGEPTAKAVLLYGPPGVGKTTLAEALARDYKLELLEMNASDSRNLRDIKDVAERASISGSLFGIKGKIILLDEIDGIYSRADAGAIPAILELIEKTKYPVILTANDPWDPSLRSLRNAVKMIELKRLGKYPLKRLLKRICEKEKIVCIDEALDHIIEQSEGDARYCINMLQGIAEGYGKVTLDNVKELVRRKDRELDPFETLRDVFWAKYYWQAKNAVTNSQVDYELLMRWFDENIPLQYTSMEDVWRAYEALSRASVFLTRAKQVGWDLLSYVFDLMGPGIAFASLEKKKPGYKARWVKYQFPQYIQALARTKEKRDSIETLLKKIGEKTHTSKRKVLNDTLPFLASYYTRHAEAVENYLQLTEGEKEILNVFTQASKPTSEEKAEKSKKYYPKRSSSRKT.

Residue 48-55 coordinates ATP; the sequence is GPPGVGKT. A disordered region spans residues 410–437; that stretch reads TQASKPTSEEKAEKSKKYYPKRSSSRKT. The span at 416–425 shows a compositional bias: basic and acidic residues; sequence TSEEKAEKSK. Residues 426–437 are compositionally biased toward basic residues; sequence KYYPKRSSSRKT.

Belongs to the activator 1 small subunits family. RfcL subfamily. Heteromultimer composed of small subunits (RfcS) and large subunits (RfcL).

Functionally, part of the RFC clamp loader complex which loads the PCNA sliding clamp onto DNA. The chain is Replication factor C large subunit from Sulfolobus acidocaldarius (strain ATCC 33909 / DSM 639 / JCM 8929 / NBRC 15157 / NCIMB 11770).